The chain runs to 510 residues: Cytochrome P450 705A20 (510 aa).

The chain crosses the membrane as a helical span at residues 7 to 27 (QHCFSFILLCFFSLLCYSLLF).

It belongs to the cytochrome P450 family. Requires heme as cofactor.

The protein resides in the membrane. The sequence is that of Cytochrome P450 705A20 (CYP705A20) from Arabidopsis thaliana (Mouse-ear cress).